The chain runs to 273 residues: 4-hydroxy-tetrahydrodipicolinate reductase (273 aa).

NAD(+) is bound by residues 8-13 (GACGRM), E34, 102-104 (GTT), and 128-131 (APNM). H160 serves as the catalytic Proton donor/acceptor. H161 serves as a coordination point for (S)-2,3,4,5-tetrahydrodipicolinate. K164 (proton donor) is an active-site residue. Residue 170–171 (GT) coordinates (S)-2,3,4,5-tetrahydrodipicolinate.

Belongs to the DapB family.

It is found in the cytoplasm. It carries out the reaction (S)-2,3,4,5-tetrahydrodipicolinate + NAD(+) + H2O = (2S,4S)-4-hydroxy-2,3,4,5-tetrahydrodipicolinate + NADH + H(+). It catalyses the reaction (S)-2,3,4,5-tetrahydrodipicolinate + NADP(+) + H2O = (2S,4S)-4-hydroxy-2,3,4,5-tetrahydrodipicolinate + NADPH + H(+). It functions in the pathway amino-acid biosynthesis; L-lysine biosynthesis via DAP pathway; (S)-tetrahydrodipicolinate from L-aspartate: step 4/4. Its function is as follows. Catalyzes the conversion of 4-hydroxy-tetrahydrodipicolinate (HTPA) to tetrahydrodipicolinate. This Methanothermobacter thermautotrophicus (strain ATCC 29096 / DSM 1053 / JCM 10044 / NBRC 100330 / Delta H) (Methanobacterium thermoautotrophicum) protein is 4-hydroxy-tetrahydrodipicolinate reductase.